The following is a 381-amino-acid chain: Protein palisade (381 aa).

The first 25 residues, 1–25 (MMMHSRNRSWTLTLLALGVVLATSA), serve as a signal peptide directing secretion. Tandem repeats lie at residues 190–199 (PAAPAYEAPA), 200–209 (PPAPAYEAPA), 210–219 (PPAPAYEAPA), 220–229 (PAAPAYEAPA), 230–239 (PAAPAYEAPT), and 247–256 (PPAPAYEPPA). Residues 190–256 (PAAPAYEAPA…PPAPAYEPPA (67 aa)) form a 6 X 10 AA approximate tandem repeats of P-[AP]-A-P-A-Y-E-[AP]-P-[AT] region. Disordered stretches follow at residues 236–270 (EAPTTDYSAPAPPAPAYEPPASSYTQGYSQPAQPS) and 309–329 (TPTAPPPPPPPAPVYEAPSQN). Pro residues predominate over residues 311-321 (TAPPPPPPPAP).

Post-translationally, sulfated by pip; may be involved in embryo dorsal-ventral axis determination. Sulfation by pip may occur on covalently bound glycosaminoglycans. May undergo both disulfide and non-disulfide cross-linking upon incorporation into the vitelline membrane. As to expression, present in the perivitelline space of stage 10 egg chambers and in the vitelline membrane adjacent to the oocyte in stage 13 and 14 egg chambers (at protein level).

It is found in the secreted. The protein resides in the extracellular space. The protein localises to the extracellular matrix. Minor protein component of the vitelline membrane. Involved in vitelline membrane biogenesis during late stages of oogenesis. Required for efficient disulfide and non-disulfide cross-linking of several vitelline membrane components. The protein is Protein palisade of Drosophila melanogaster (Fruit fly).